A 397-amino-acid polypeptide reads, in one-letter code: Acetate kinase (397 aa).

Asparagine 9 contributes to the Mg(2+) binding site. Lysine 16 provides a ligand contact to ATP. Arginine 87 is a binding site for substrate. Aspartate 144 functions as the Proton donor/acceptor in the catalytic mechanism. ATP contacts are provided by residues 204 to 208 (HLGNG), 279 to 281 (DCR), and 327 to 331 (GIGEN). Glutamate 381 lines the Mg(2+) pocket.

Belongs to the acetokinase family. As to quaternary structure, homodimer. Mg(2+) serves as cofactor. Mn(2+) is required as a cofactor.

The protein localises to the cytoplasm. It catalyses the reaction acetate + ATP = acetyl phosphate + ADP. It participates in metabolic intermediate biosynthesis; acetyl-CoA biosynthesis; acetyl-CoA from acetate: step 1/2. Its function is as follows. Catalyzes the formation of acetyl phosphate from acetate and ATP. Can also catalyze the reverse reaction. The sequence is that of Acetate kinase from Chromobacterium violaceum (strain ATCC 12472 / DSM 30191 / JCM 1249 / CCUG 213 / NBRC 12614 / NCIMB 9131 / NCTC 9757 / MK).